A 142-amino-acid chain; its full sequence is Putative pre-16S rRNA nuclease (142 aa).

This sequence belongs to the YqgF nuclease family.

The protein resides in the cytoplasm. In terms of biological role, could be a nuclease involved in processing of the 5'-end of pre-16S rRNA. This is Putative pre-16S rRNA nuclease from Staphylococcus epidermidis (strain ATCC 35984 / DSM 28319 / BCRC 17069 / CCUG 31568 / BM 3577 / RP62A).